The sequence spans 502 residues: ATP synthase subunit alpha, chloroplastic (502 aa).

170-177 contributes to the ATP binding site; the sequence is GDRQTGKS.

The protein belongs to the ATPase alpha/beta chains family. In terms of assembly, F-type ATPases have 2 components, CF(1) - the catalytic core - and CF(0) - the membrane proton channel. CF(1) has five subunits: alpha(3), beta(3), gamma(1), delta(1), epsilon(1). CF(0) has four main subunits: a, b, b' and c.

It is found in the plastid. It localises to the chloroplast thylakoid membrane. It carries out the reaction ATP + H2O + 4 H(+)(in) = ADP + phosphate + 5 H(+)(out). Functionally, produces ATP from ADP in the presence of a proton gradient across the membrane. The alpha chain is a regulatory subunit. The sequence is that of ATP synthase subunit alpha, chloroplastic from Guillardia theta (Cryptophyte).